The primary structure comprises 408 residues: Serine/threonine-protein kinase UCNL (408 aa).

The Protein kinase domain maps to 21-341; that stretch reads IKALKILGKG…AAEIKELAFF (321 aa). Residues 27–35 and K54 each bind ATP; that span reads LGKGATGTV. The active-site Proton acceptor is the D152. The AGC-kinase C-terminal domain maps to 342–408; the sequence is AGVRWDLLTE…CRKNDPFIEF (67 aa).

Belongs to the protein kinase superfamily. AGC Ser/Thr protein kinase family. As to expression, expressed in the epidermis and cortex of the transition zone of the root apex. Expressed in rosette leaves, stems, flowers and siliques.

It is found in the cytoplasm. The protein localises to the nucleus. The enzyme catalyses L-seryl-[protein] + ATP = O-phospho-L-seryl-[protein] + ADP + H(+). The catalysed reaction is L-threonyl-[protein] + ATP = O-phospho-L-threonyl-[protein] + ADP + H(+). Regulates planar ovule integument development. The polypeptide is Serine/threonine-protein kinase UCNL (Arabidopsis thaliana (Mouse-ear cress)).